We begin with the raw amino-acid sequence, 175 residues long: Shikimate kinase (175 aa).

ATP is bound at residue 14–19 (GAGKST). Mg(2+) is bound at residue serine 18. The substrate site is built by aspartate 36, arginine 60, and glycine 82. Position 120 (arginine 120) interacts with ATP. Arginine 140 lines the substrate pocket. Position 157 (glutamine 157) interacts with ATP.

Belongs to the shikimate kinase family. In terms of assembly, monomer. Mg(2+) serves as cofactor.

It localises to the cytoplasm. The catalysed reaction is shikimate + ATP = 3-phosphoshikimate + ADP + H(+). Its pathway is metabolic intermediate biosynthesis; chorismate biosynthesis; chorismate from D-erythrose 4-phosphate and phosphoenolpyruvate: step 5/7. In terms of biological role, catalyzes the specific phosphorylation of the 3-hydroxyl group of shikimic acid using ATP as a cosubstrate. This chain is Shikimate kinase, found in Mannheimia succiniciproducens (strain KCTC 0769BP / MBEL55E).